The primary structure comprises 371 residues: Uroporphyrinogen decarboxylase (371 aa).

A compositionally biased stretch (polar residues) spans 1-14 (MARWATMSTETTGT). A disordered region spans residues 1–30 (MARWATMSTETTGTGARDEGPRPGDPADSP). Residues 49-53 (RQAGR), D98, Y173, S228, and H342 each bind substrate.

The protein belongs to the uroporphyrinogen decarboxylase family. In terms of assembly, homodimer.

It is found in the cytoplasm. It catalyses the reaction uroporphyrinogen III + 4 H(+) = coproporphyrinogen III + 4 CO2. The protein operates within porphyrin-containing compound metabolism; protoporphyrin-IX biosynthesis; coproporphyrinogen-III from 5-aminolevulinate: step 4/4. Its function is as follows. Catalyzes the decarboxylation of four acetate groups of uroporphyrinogen-III to yield coproporphyrinogen-III. The polypeptide is Uroporphyrinogen decarboxylase (Salinispora tropica (strain ATCC BAA-916 / DSM 44818 / JCM 13857 / NBRC 105044 / CNB-440)).